The sequence spans 347 residues: Beta-hexosaminidase (347 aa).

Residues Asp62, Arg70, Arg134, and 164–165 contribute to the substrate site; that span reads KH. The Proton donor/acceptor role is filled by His177. Asp249 functions as the Nucleophile in the catalytic mechanism.

The protein belongs to the glycosyl hydrolase 3 family. NagZ subfamily.

The protein localises to the cytoplasm. The catalysed reaction is Hydrolysis of terminal non-reducing N-acetyl-D-hexosamine residues in N-acetyl-beta-D-hexosaminides.. The protein operates within cell wall biogenesis; peptidoglycan recycling. Plays a role in peptidoglycan recycling by cleaving the terminal beta-1,4-linked N-acetylglucosamine (GlcNAc) from peptide-linked peptidoglycan fragments, giving rise to free GlcNAc, anhydro-N-acetylmuramic acid and anhydro-N-acetylmuramic acid-linked peptides. This chain is Beta-hexosaminidase, found in Mannheimia succiniciproducens (strain KCTC 0769BP / MBEL55E).